A 107-amino-acid polypeptide reads, in one-letter code: Putative antitoxin VapB5 (107 aa).

Transmembrane regions (helical) follow at residues 3–23 (GPVIIPLISTLGLSFLAILLA) and 65–85 (LIILTPALTWSLTALSMAYLY).

The protein resides in the cell membrane. Its function is as follows. Possibly the antitoxin component of a type II toxin-antitoxin (TA) system. Its cognate toxin is VapC5 (Potential). The polypeptide is Putative antitoxin VapB5 (vapB5) (Methanocaldococcus jannaschii (strain ATCC 43067 / DSM 2661 / JAL-1 / JCM 10045 / NBRC 100440) (Methanococcus jannaschii)).